Here is a 389-residue protein sequence, read N- to C-terminus: Chaperone protein DnaJ (389 aa).

The J domain occupies Asp6 to Gly70. The CR-type zinc finger occupies Gly131 to Arg213. Residues Cys144, Cys147, Cys161, Cys164, Cys187, Cys190, Cys201, and Cys204 each coordinate Zn(2+). CXXCXGXG motif repeat units follow at residues Cys144–Gly151, Cys161–Gly168, Cys187–Gly194, and Cys201–Gly208. The segment at Ser145–Thr167 is disordered. Residues Leu351–Ser389 are disordered. A compositionally biased stretch (basic and acidic residues) spans Lys355–Ser389.

Belongs to the DnaJ family. In terms of assembly, homodimer. Zn(2+) is required as a cofactor.

It is found in the cytoplasm. Functionally, participates actively in the response to hyperosmotic and heat shock by preventing the aggregation of stress-denatured proteins and by disaggregating proteins, also in an autonomous, DnaK-independent fashion. Unfolded proteins bind initially to DnaJ; upon interaction with the DnaJ-bound protein, DnaK hydrolyzes its bound ATP, resulting in the formation of a stable complex. GrpE releases ADP from DnaK; ATP binding to DnaK triggers the release of the substrate protein, thus completing the reaction cycle. Several rounds of ATP-dependent interactions between DnaJ, DnaK and GrpE are required for fully efficient folding. Also involved, together with DnaK and GrpE, in the DNA replication of plasmids through activation of initiation proteins. This is Chaperone protein DnaJ from Methanosarcina mazei (strain ATCC BAA-159 / DSM 3647 / Goe1 / Go1 / JCM 11833 / OCM 88) (Methanosarcina frisia).